Here is a 251-residue protein sequence, read N- to C-terminus: Chloride intracellular channel protein 5 (251 aa).

The tract at residues 1–98 is required for insertion into the membrane; that stretch reads MTDSATANGD…EEFLEETLTP (98 aa). Residues 32-35 carry the G-site motif; sequence CPFS. Residues 34-54 traverse the membrane as a helical segment; sequence FSQRLFMILWLKGVVFNVTTV. One can recognise a GST C-terminal domain in the interval 101–241; the sequence is YPKLAARHRE…AADSEIELAY (141 aa).

This sequence belongs to the chloride channel CLIC family. As to quaternary structure, component of a multimeric complex consisting of several cytoskeletal proteins, including actin, ezrin, alpha-actinin, gelsolin, and IQGAP1. Interacts with AKAP9. Interacts with TPRN. TPRN, CLIC5 and PTPQR form concentric rings at the base of stereocilia and may form a complex. Interacts with EZR, MYO6 and RDX; the proteins may work together as a complex to stabilize linkages between the plasma membrane and subjacent actin cytoskeleton at the stereocilium base. As to expression, detected in cochlea, in cochlear and vestibular hair cell bundles in the organ of Corti (at protein level). Expressed neonatal and adult cardiomyocytes (at protein level).

It is found in the golgi apparatus. It localises to the cytoplasm. Its subcellular location is the cytoskeleton. The protein localises to the microtubule organizing center. The protein resides in the centrosome. It is found in the cell cortex. It localises to the membrane. Its subcellular location is the apical cell membrane. The protein localises to the mitochondrion. The protein resides in the cell projection. It is found in the stereocilium. It catalyses the reaction Na(+)(in) = Na(+)(out). The enzyme catalyses K(+)(in) = K(+)(out). The catalysed reaction is chloride(in) = chloride(out). Its activity is regulated as follows. Inhibited by F-actin. In terms of biological role, in the soluble state, catalyzes glutaredoxin-like thiol disulfide exchange reactions with reduced glutathione as electron donor. Can insert into membranes and form non-selective ion channels almost equally permeable to Na(+), K(+) and Cl(-). Required for normal hearing. It is necessary for the formation of stereocilia in the inner ear and normal development of the organ of Corti. May play a role in the regulation of transepithelial ion absorption and secretion. Is required for the development and/or maintenance of the proper glomerular endothelial cell and podocyte architecture. Plays a role in formation of the lens suture in the eye, which is important for normal optical properties of the lens. The chain is Chloride intracellular channel protein 5 (Clic5) from Rattus norvegicus (Rat).